The following is a 504-amino-acid chain: L-carnitine/gamma-butyrobetaine antiporter (504 aa).

Transmembrane regions (helical) follow at residues I10–V30, W51–F71, I92–I112, G143–V163, F195–V215, L231–L251, S263–M283, W316–A336, L347–G367, W398–A418, L446–L466, and A475–I495.

It belongs to the BCCT transporter (TC 2.A.15) family. CaiT subfamily. Homotrimer.

Its subcellular location is the cell inner membrane. The enzyme catalyses 4-(trimethylamino)butanoate(in) + (R)-carnitine(out) = 4-(trimethylamino)butanoate(out) + (R)-carnitine(in). The protein operates within amine and polyamine metabolism; carnitine metabolism. In terms of biological role, catalyzes the exchange of L-carnitine for gamma-butyrobetaine. This chain is L-carnitine/gamma-butyrobetaine antiporter, found in Escherichia coli (strain ATCC 8739 / DSM 1576 / NBRC 3972 / NCIMB 8545 / WDCM 00012 / Crooks).